Reading from the N-terminus, the 176-residue chain is uncharacterized protein (176 aa).

Residues 87-100 (ASASSQLRASRVQS) show a composition bias toward low complexity. Positions 87–109 (ASASSQLRASRVQSGTRQSARAG) are disordered.

This is an uncharacterized protein from Homo sapiens (Human).